The chain runs to 220 residues: 7-cyano-7-deazaguanine synthase (220 aa).

ATP is bound at residue 7-17 (LSGGMDSSITA). Zn(2+) contacts are provided by cysteine 185, cysteine 193, cysteine 196, and cysteine 199.

It belongs to the QueC family. It depends on Zn(2+) as a cofactor.

The catalysed reaction is 7-carboxy-7-deazaguanine + NH4(+) + ATP = 7-cyano-7-deazaguanine + ADP + phosphate + H2O + H(+). The protein operates within purine metabolism; 7-cyano-7-deazaguanine biosynthesis. In terms of biological role, catalyzes the ATP-dependent conversion of 7-carboxy-7-deazaguanine (CDG) to 7-cyano-7-deazaguanine (preQ(0)). The protein is 7-cyano-7-deazaguanine synthase of Nitratiruptor sp. (strain SB155-2).